Reading from the N-terminus, the 245-residue chain is UDP-2,3-diacylglucosamine hydrolase (245 aa).

Residues Asp8, His10, Asp41, Asn79, and His114 each contribute to the Mn(2+) site. 79–80 (NR) serves as a coordination point for substrate. 5 residues coordinate substrate: Asp122, Ser160, Asn164, Lys167, and His195. The Mn(2+) site is built by His195 and His197.

Belongs to the LpxH family. Mn(2+) serves as cofactor.

The protein resides in the cell inner membrane. The enzyme catalyses UDP-2-N,3-O-bis[(3R)-3-hydroxytetradecanoyl]-alpha-D-glucosamine + H2O = 2-N,3-O-bis[(3R)-3-hydroxytetradecanoyl]-alpha-D-glucosaminyl 1-phosphate + UMP + 2 H(+). It functions in the pathway glycolipid biosynthesis; lipid IV(A) biosynthesis; lipid IV(A) from (3R)-3-hydroxytetradecanoyl-[acyl-carrier-protein] and UDP-N-acetyl-alpha-D-glucosamine: step 4/6. In terms of biological role, hydrolyzes the pyrophosphate bond of UDP-2,3-diacylglucosamine to yield 2,3-diacylglucosamine 1-phosphate (lipid X) and UMP by catalyzing the attack of water at the alpha-P atom. Involved in the biosynthesis of lipid A, a phosphorylated glycolipid that anchors the lipopolysaccharide to the outer membrane of the cell. This Photobacterium profundum (strain SS9) protein is UDP-2,3-diacylglucosamine hydrolase.